Reading from the N-terminus, the 355-residue chain is MLERLENCEKRFIEIEEEISKPEVINDARLVRTLAQERADLQDKVEMYRRYKTMAKELEEAKNLLESEKDEDMRGMVRGEIENLEKSLTDLYEQMTFELLPKDPNDDKSIIMEIRAGTGGDEAGLFASDLYKMYIRYALLKNWKTEVIDINGNVAGIIKEVVFEVNGKGAFSRLKYERGVHRVQRVPQTEASGRIHTSTATVAVLPQVEEVDIDINMDEVRVDIFHSSGAGGQNVQKVATAIRLTHMPTGLVVCCQDERSQLKNKNKAFAVLRARLMELEQSKVDEERTESRRAQVGQADRSEKIRTYNFPQDRLTDHRIGLTAHNLPHILEGYLDEIIDTLATHEQTELLKGED.

An N5-methylglutamine modification is found at Q233.

Belongs to the prokaryotic/mitochondrial release factor family. In terms of processing, methylated by PrmC. Methylation increases the termination efficiency of RF1.

The protein resides in the cytoplasm. Functionally, peptide chain release factor 1 directs the termination of translation in response to the peptide chain termination codons UAG and UAA. This Dehalococcoides mccartyi (strain ATCC BAA-2100 / JCM 16839 / KCTC 5957 / BAV1) protein is Peptide chain release factor 1.